A 301-amino-acid polypeptide reads, in one-letter code: ATP synthase gamma chain (301 aa).

The protein belongs to the ATPase gamma chain family. As to quaternary structure, F-type ATPases have 2 components, CF(1) - the catalytic core - and CF(0) - the membrane proton channel. CF(1) has five subunits: alpha(3), beta(3), gamma(1), delta(1), epsilon(1). CF(0) has three main subunits: a, b and c.

The protein resides in the cell inner membrane. Its function is as follows. Produces ATP from ADP in the presence of a proton gradient across the membrane. The gamma chain is believed to be important in regulating ATPase activity and the flow of protons through the CF(0) complex. This Helicobacter pylori (strain HPAG1) protein is ATP synthase gamma chain.